Here is a 125-residue protein sequence, read N- to C-terminus: MAISKEEVLEYIGSLSVLELAELVKMFEEKFGVSATPTVVAGAAVAGGAAAESEEKTEFNVILADSGAEKIKVIKVVREITGLGLKEAKDATEKTPHVLKEGVNKEEAETIKKKLEEVGAKVEVK.

Belongs to the bacterial ribosomal protein bL12 family. In terms of assembly, homodimer. Part of the ribosomal stalk of the 50S ribosomal subunit. Forms a multimeric L10(L12)X complex, where L10 forms an elongated spine to which 2 to 4 L12 dimers bind in a sequential fashion. Binds GTP-bound translation factors.

Functionally, forms part of the ribosomal stalk which helps the ribosome interact with GTP-bound translation factors. Is thus essential for accurate translation. This Helicobacter pylori (strain P12) protein is Large ribosomal subunit protein bL12.